Reading from the N-terminus, the 336-residue chain is F420-dependent glucose-6-phosphate dehydrogenase (336 aa).

A coenzyme F420-(gamma-Glu)n-binding site is contributed by aspartate 39. Histidine 40 (proton donor) is an active-site residue. Coenzyme F420-(gamma-Glu)n contacts are provided by residues threonine 76 and 107-108 (TG). Glutamate 109 acts as the Proton acceptor in catalysis. Coenzyme F420-(gamma-Glu)n contacts are provided by residues asparagine 112, 177–178 (GG), and 180–181 (VV). The substrate site is built by threonine 195, lysine 198, lysine 259, and arginine 283.

This sequence belongs to the F420-dependent glucose-6-phosphate dehydrogenase family. Homodimer.

It carries out the reaction oxidized coenzyme F420-(gamma-L-Glu)(n) + D-glucose 6-phosphate + H(+) = 6-phospho-D-glucono-1,5-lactone + reduced coenzyme F420-(gamma-L-Glu)(n). Its function is as follows. Catalyzes the coenzyme F420-dependent oxidation of glucose 6-phosphate (G6P) to 6-phosphogluconolactone. Appears to have a role in resistance to oxidative stress, via its consumption of G6P that serves as a source of reducing power to combat oxidative stress in mycobacteria. Cannot use NAD, NADP, FAD or FMN instead of coenzyme F420 as an electron acceptor. Exhibits nearly no activity with D-mannose-6-phosphate or D-fructose-6-phosphate as substrate. The protein is F420-dependent glucose-6-phosphate dehydrogenase (fgd) of Mycolicibacterium smegmatis (strain ATCC 700084 / mc(2)155) (Mycobacterium smegmatis).